Reading from the N-terminus, the 106-residue chain is MLILSSRYAMKRDVLIIVIFTVLVLIIISRSSSIQAGRFMTTGRNRNLSVARSLYYKNHHKVVITEMSNFNKVRRRSSRFRRKTDGDEEEEEKRSIPTGPNPLHNK.

The signal sequence occupies residues Met-1–Ser-31. N-linked (GlcNAc...) asparagine glycosylation is present at Asn-47. Positions Lys-72–Arg-82 are enriched in basic residues. Residues Lys-72–Lys-106 form a disordered region. 2 positions are modified to hydroxyproline: Pro-97 and Pro-100. A glycan (O-linked (Ara...) hydroxyproline) is linked at Pro-100.

Belongs to the CLV3/ESR signal peptide family. The O-glycosylation (arabinosylation) of the hydroxyproline Pro-100 enhances binding affinity of the CLE21p peptide for its receptor. In terms of tissue distribution, mostly expressed in leaves and apex, and, to a lower extent, in seedlings, flowers, stems and siliques.

The protein localises to the secreted. It is found in the extracellular space. Extracellular signal peptide that regulates cell fate. Represses root apical meristem maintenance. Regulates the transition of protophloem cells from proliferation to differentiation, thus impinging on postembryonic growth capacity of the root meristem; this signaling pathway requires CRN and CLV2. This chain is CLAVATA3/ESR (CLE)-related protein 21, found in Arabidopsis thaliana (Mouse-ear cress).